The primary structure comprises 176 residues: dCTP deaminase (176 aa).

DCTP-binding positions include 99–104 (RSTLAR) and aspartate 115. Catalysis depends on glutamate 125, which acts as the Proton donor/acceptor. Glutamine 163 serves as a coordination point for dCTP.

The protein belongs to the dCTP deaminase family. In terms of assembly, homotrimer.

It carries out the reaction dCTP + H2O + H(+) = dUTP + NH4(+). It functions in the pathway pyrimidine metabolism; dUMP biosynthesis; dUMP from dCTP (dUTP route): step 1/2. Catalyzes the deamination of dCTP to dUTP. This chain is dCTP deaminase, found in Pyrobaculum neutrophilum (strain DSM 2338 / JCM 9278 / NBRC 100436 / V24Sta) (Thermoproteus neutrophilus).